The chain runs to 124 residues: UPF0344 protein OB1184 (124 aa).

The next 4 helical transmembrane spans lie at histidine 3–tyrosine 23, isoleucine 33–threonine 53, methionine 62–methionine 82, and isoleucine 104–isoleucine 124.

This sequence belongs to the UPF0344 family.

Its subcellular location is the cell membrane. This Oceanobacillus iheyensis (strain DSM 14371 / CIP 107618 / JCM 11309 / KCTC 3954 / HTE831) protein is UPF0344 protein OB1184.